The sequence spans 688 residues: MATEIDLLRDQKDKLNDILRQHQIEHIFRDPTMQNSMSKGGRGDTLVDSINEQSSLPPLIAEYEKHLEELNRQLTYYQKHMGEMKLQLETVITENERLHSKLKDAVEKQLEALPFGTGIGNDICADDETVRILQEQLQLANQEKTWALELWQTASQELQSVQKLYQEHMTEAQIHEFENRKQKDQLNNFQQLTKKLHVANENIEMTNHHFLKTVTEQNMEIEKLRKHLRQARLDLRVAVSKVEELTKVTEGLQEQMLKKEEDIMSAQGKEEASDRRVQQLQSSIKQLESRLCVAIEEADVLKTGKSNLEKQIKELQAKCSESENEKYEAISRARDSMQLLEEANIKQNQILLEEKQKEVDREKMKKTMSQLIQDAAIKARKEVESTKKQYEILISQLKEELSTLQMDCDEKQGQIDRAIRGKRAVEEELEKIYREGKQDESDYRKLEEMHQRCLAAERSKDDLQLRLKSAENRIKQLEINSSEEMSRSHEMIQKLQTVLESERENCGFVSEQRLKLQQENEQLQKETEDLRKVALEAQKKAKLKVSTMEHQFSIKEHGFEVQLREMEDSNRNSIVELRHLLAAQQKTANRWKEETKKLTESAEMRISSLKSELSRQKLHTQELLSQLEMANEKVAENEKLILEHQEKANRLQRRLSQAEERAASASQQLSVITVQRRKAASMMNLENI.

At Ala-2 the chain carries N-acetylalanine. Coiled-coil stretches lie at residues Leu-59 to Lys-108 and Gln-152 to Thr-673. Ser-681 bears the Phosphoserine mark.

Interacts with SCN10A and clathrin. Identified in a complex containing SCN10A, clathrin and SCLT1.

It is found in the cytoplasm. It localises to the cytoskeleton. The protein localises to the microtubule organizing center. The protein resides in the centrosome. Its subcellular location is the centriole. Its function is as follows. Adapter protein that links SCN10A to clathrin. Regulates SCN10A channel activity, possibly by promoting channel internalization. The chain is Sodium channel and clathrin linker 1 (Sclt1) from Mus musculus (Mouse).